The sequence spans 550 residues: Methyl-coenzyme M reductase I subunit alpha (550 aa).

Glutamine 147 lines the coenzyme F430 pocket. Coenzyme B-binding positions include arginine 225, 256 to 257 (KH), and arginine 270. Histidine 257 bears the Pros-methylhistidine mark. A 5-methylarginine modification is found at arginine 271. Residue tyrosine 333 coordinates coenzyme M. Glutamine 400 is subject to 2-methylglutamine. Tyrosine 444 contacts coenzyme M. Position 445 is a 1-thioglycine (glycine 445). The residue at position 450 (aspartate 450) is a (Z)-2,3-didehydroaspartate. The residue at position 452 (cysteine 452) is an S-methylcysteine.

This sequence belongs to the methyl-coenzyme M reductase alpha subunit family. As to quaternary structure, MCR is a hexamer of two alpha, two beta, and two gamma chains, forming a dimer of heterotrimers. Requires coenzyme F430 as cofactor. In terms of processing, the alpha subunit contains six modified amino acids near the active site region. Is methylated on His-257, Arg-271, Gln-400 and Cys-452, probably by the action of specific S-adenosylmethionine-dependent methyltransferases. Also contains a thioglycine at position 445, forming a thiopeptide bond. Contains a didehydroaspartate residue at position 450. The methylation on C5 of Arg-271 is a post-translational methylation not essential in vivo, but which plays a role for the stability and structural integrity of MCR.

It localises to the cytoplasm. The enzyme catalyses coenzyme B + methyl-coenzyme M = methane + coenzyme M-coenzyme B heterodisulfide. Its pathway is one-carbon metabolism; methyl-coenzyme M reduction; methane from methyl-coenzyme M: step 1/1. Methyl-coenzyme M reductase activity is inhibited by 3-nitrooxypropanol (3-NOP) in vitro and in vivo, by oxidation of its active site Ni(I), which stops both growth and methanogenesis. Is also inhibited by the reaction product CoM-S-S-CoB. Its function is as follows. Component of the methyl-coenzyme M reductase (MCR) I that catalyzes the reductive cleavage of methyl-coenzyme M (CoM-S-CH3 or 2-(methylthio)ethanesulfonate) using coenzyme B (CoB or 7-mercaptoheptanoylthreonine phosphate) as reductant which results in the production of methane and the mixed heterodisulfide of CoB and CoM (CoM-S-S-CoB). This is the final step in methanogenesis. Neither N-6-mercaptohexanoylthreonine phosphate (H-S-HxoTP) nor N-8-mercaptooctanoylthreonine phosphate (H-SOcoTP) nor any other thiol compound such as CoA or CoM can substitute for CoB as the electron donor. The sequence is that of Methyl-coenzyme M reductase I subunit alpha (mcrA) from Methanothermobacter marburgensis (strain ATCC BAA-927 / DSM 2133 / JCM 14651 / NBRC 100331 / OCM 82 / Marburg) (Methanobacterium thermoautotrophicum).